The following is a 340-amino-acid chain: N-acetyl-gamma-glutamyl-phosphate reductase (340 aa).

Residue Cys-148 is part of the active site.

The protein belongs to the NAGSA dehydrogenase family. Type 1 subfamily.

Its subcellular location is the cytoplasm. It carries out the reaction N-acetyl-L-glutamate 5-semialdehyde + phosphate + NADP(+) = N-acetyl-L-glutamyl 5-phosphate + NADPH + H(+). Its pathway is amino-acid biosynthesis; L-arginine biosynthesis; N(2)-acetyl-L-ornithine from L-glutamate: step 3/4. In terms of biological role, catalyzes the NADPH-dependent reduction of N-acetyl-5-glutamyl phosphate to yield N-acetyl-L-glutamate 5-semialdehyde. The polypeptide is N-acetyl-gamma-glutamyl-phosphate reductase (Methanosarcina mazei (strain ATCC BAA-159 / DSM 3647 / Goe1 / Go1 / JCM 11833 / OCM 88) (Methanosarcina frisia)).